The following is a 367-amino-acid chain: 3-dehydroquinate synthase (367 aa).

Residues 99-103, 123-124, Lys136, Lys145, and 163-166 contribute to the NAD(+) site; these read GVVGD, TT, and FLRT. Zn(2+)-binding residues include Glu178, His242, and His259.

Belongs to the sugar phosphate cyclases superfamily. Dehydroquinate synthase family. Requires Co(2+) as cofactor. Zn(2+) serves as cofactor. The cofactor is NAD(+).

The protein resides in the cytoplasm. It carries out the reaction 7-phospho-2-dehydro-3-deoxy-D-arabino-heptonate = 3-dehydroquinate + phosphate. The protein operates within metabolic intermediate biosynthesis; chorismate biosynthesis; chorismate from D-erythrose 4-phosphate and phosphoenolpyruvate: step 2/7. Catalyzes the conversion of 3-deoxy-D-arabino-heptulosonate 7-phosphate (DAHP) to dehydroquinate (DHQ). The sequence is that of 3-dehydroquinate synthase from Chlorobaculum parvum (strain DSM 263 / NCIMB 8327) (Chlorobium vibrioforme subsp. thiosulfatophilum).